A 308-amino-acid chain; its full sequence is Apolipoprotein E (308 aa).

The N-terminal stretch at 1–18 (MKFLWAALVVTLLAGCQA) is a signal peptide. 8 consecutive repeat copies span residues 75–96 (LLIE…KQVG), 97–118 (PIAQ…ARLE), 119–140 (SDME…AALG), 141–162 (QNTD…KRLL), 163–184 (RDAE…EAAE), 185–206 (RGVS…LQAI), 207–224 (PPSQ…QKVR), and 225–246 (GRLE…DQME). The segment at 75 to 246 (LLIEETMKEV…RLDDVRDQME (172 aa)) is 8 X 22 AA approximate tandem repeats. The interval 153-163 (HLRKLRKRLLR) is LDL and other lipoprotein receptors binding. Residue 157–160 (LRKR) participates in heparin binding. The segment at 205 to 281 (AIPPSQQLRE…SWFEPLVQDM (77 aa)) is lipid-binding and lipoprotein association. 220–227 (GQKVRGRL) contributes to the heparin binding site. Residues 257–308 (SQVRLQAEAFQTRLKSWFEPLVQDMQRQWASLVEKVQSSLGISPSTKPSKTK) are homooligomerization. The interval 269 to 281 (RLKSWFEPLVQDM) is specificity for association with VLDL.

Belongs to the apolipoprotein A1/A4/E family. As to quaternary structure, homotetramer. May interact with ABCA1; functionally associated with ABCA1 in the biogenesis of HDLs. May interact with APP/A4 amyloid-beta peptide; the interaction is extremely stable in vitro but its physiological significance is unclear. May interact with MAPT. May interact with MAP2. In the cerebrospinal fluid, interacts with secreted SORL1. Interacts with PMEL; this allows the loading of PMEL luminal fragment on ILVs to induce fibril nucleation. APOE exists as multiple glycosylated and sialylated glycoforms within cells and in plasma. The extent of glycosylation and sialylation are tissue and context specific. In terms of processing, glycated in plasma VLDL. Post-translationally, phosphorylated by FAM20C in the extracellular medium.

It is found in the secreted. It localises to the extracellular space. The protein resides in the extracellular matrix. Its subcellular location is the extracellular vesicle. The protein localises to the endosome. It is found in the multivesicular body. Its function is as follows. APOE is an apolipoprotein, a protein associating with lipid particles, that mainly functions in lipoprotein-mediated lipid transport between organs via the plasma and interstitial fluids. APOE is a core component of plasma lipoproteins and is involved in their production, conversion and clearance. Apolipoproteins are amphipathic molecules that interact both with lipids of the lipoprotein particle core and the aqueous environment of the plasma. As such, APOE associates with chylomicrons, chylomicron remnants, very low density lipoproteins (VLDL) and intermediate density lipoproteins (IDL) but shows a preferential binding to high-density lipoproteins (HDL). It also binds a wide range of cellular receptors including the LDL receptor/LDLR and the very low-density lipoprotein receptor/VLDLR that mediate the cellular uptake of the APOE-containing lipoprotein particles. Finally, APOE also has a heparin-binding activity and binds heparan-sulfate proteoglycans on the surface of cells, a property that supports the capture and the receptor-mediated uptake of APOE-containing lipoproteins by cells. This chain is Apolipoprotein E (APOE), found in Pteropus alecto (Black flying fox).